Here is a 1088-residue protein sequence, read N- to C-terminus: Receptor-type guanylate cyclase gcy-17 (1088 aa).

An N-terminal signal peptide occupies residues 1-20 (MLFLRLFIFTPFLILANCQA). Over 21 to 480 (RRTIKVGLLF…PPDFVRDYLV (460 aa)) the chain is Extracellular. Residues Asn33, Asn235, Asn251, Asn321, Asn381, Asn419, and Asn434 are each glycosylated (N-linked (GlcNAc...) asparagine). Residues 481 to 501 (IVIIIVMFLIFAVSAAVGAVF) traverse the membrane as a helical segment. The Cytoplasmic segment spans residues 502–1088 (YAIRQKRKEI…SMARSITPEI (587 aa)). Residues 529 to 552 (SKKSKSEASQRSFASGPSTSTKLT) are disordered. Residues 535–552 (EASQRSFASGPSTSTKLT) show a composition bias toward polar residues. The region spanning 535–824 (EASQRSFASG…KGNLMDHVFN (290 aa)) is the Protein kinase domain. Positions 826–854 (LETYASTLEEEVNERTKELVEEQKKSDVL) form a coiled coil. A Guanylate cyclase domain is found at 882–1012 (TIFFSDVVQF…DAVNTASRME (131 aa)). The segment at 1069 to 1088 (SNMRKRENTPSMARSITPEI) is disordered.

This sequence belongs to the adenylyl cyclase class-4/guanylyl cyclase family. As to expression, expressed in PHA sensory neurons.

It localises to the cell membrane. It catalyses the reaction GTP = 3',5'-cyclic GMP + diphosphate. In terms of biological role, guanylate cyclase involved in the production of the second messenger cGMP. The protein is Receptor-type guanylate cyclase gcy-17 of Caenorhabditis elegans.